Consider the following 832-residue polypeptide: Mechanosensitive cation channel TMEM63B (832 aa).

At Met1 to Gly40 the chain is on the extracellular side. The helical transmembrane segment at Val41–Val65 threads the bilayer. Cys51 carries the S-palmitoyl cysteine lipid modification. Residues Ala66–Gly145 are Cytoplasmic-facing. The Mediates endoplasmic reticulum retention signature appears at Arg86–Arg88. Ser111, Ser113, Ser114, and Ser115 each carry phosphoserine. The S-palmitoyl cysteine moiety is linked to residue Cys126. Residues Gly146 to Phe178 form a helical membrane-spanning segment. At Ser179–Asn202 the chain is on the extracellular side. Residues Asn203–Thr227 form a helical membrane-spanning segment. At Ser228–Gly427 the chain is on the cytoplasmic side. The interval Arg231–Arg426 is intracellular linker IL2; confers mechanosensitivity. 2 S-palmitoyl cysteine lipidation sites follow: Cys382 and Cys398. Residues Phe428–Thr457 form a helical membrane-spanning segment. Over Met458–Asn472 the chain is Extracellular. The N-linked (GlcNAc...) asparagine glycan is linked to Asn462. The helical transmembrane segment at Pro473 to Glu502 threads the bilayer. At Ala503–Thr506 the chain is on the cytoplasmic side. A helical transmembrane segment spans residues Arg507–Trp543. Residues Leu544 to Gly566 lie on the Extracellular side of the membrane. The chain crosses the membrane as a helical span at residues Ala567 to Cys599. The segment at Ala567–Cys599 is gating helix. Residues Leu600 to Gln619 are Cytoplasmic-facing. A helical membrane pass occupies residues Phe620 to Ser638. At Ile639 to Cys641 the chain is on the extracellular side. A helical transmembrane segment spans residues Pro642 to Ala666. Topologically, residues Tyr667 to Asp673 are cytoplasmic. Residues Lys674–Arg702 traverse the membrane as a helical segment. Residues Thr703–Ala707 lie on the Extracellular side of the membrane. A helical transmembrane segment spans residues Pro708–Val728. S-palmitoyl cysteine attachment occurs at residues Cys726 and Cys729. Residues Cys729–Gln832 lie on the Cytoplasmic side of the membrane. Disordered regions lie at residues Thr748–Lys767 and Leu776–Phe818. Positions Asp749–Arg758 are enriched in polar residues. A compositionally biased stretch (low complexity) spans Pro789–Ser801.

It belongs to the CSC1 (TC 1.A.17) family. As to quaternary structure, monomer. Interacts with SLC19A2; interaction is required for the phospholipid scramblase activity. In terms of processing, palmitoylation is required for localization to the plasma membrane and stability. As to expression, expressed in cochlear hair cells (at protein level). Highly expressed in the subfornical organ of the brain. Expressed in small intestine. Brain-specific.

The protein localises to the cell membrane. Its subcellular location is the endoplasmic reticulum membrane. The protein resides in the lysosome membrane. It localises to the early endosome membrane. The enzyme catalyses Ca(2+)(in) = Ca(2+)(out). It carries out the reaction Mg(2+)(in) = Mg(2+)(out). The catalysed reaction is K(+)(in) = K(+)(out). It catalyses the reaction Na(+)(in) = Na(+)(out). The enzyme catalyses Cs(+)(in) = Cs(+)(out). It carries out the reaction a 1,2-diacyl-sn-glycero-3-phosphocholine(in) = a 1,2-diacyl-sn-glycero-3-phosphocholine(out). The catalysed reaction is a sphingomyelin(in) = a sphingomyelin(out). Mechanosensitive cation channel with low conductance and high activation threshold. Osmosensitive cation channel preferentially activated by hypotonic stress. Also acts as a phospholipid scramblase in response to changes in membrane structure: upon changes in membrane curvature and thickness, alters its conformation and translocates phospholipids, such as phosphatidylcholine and sphingomyelin, thereby controlling plasma membrane lipid distribution. Forms a heterodimer with SLC19A2, which mediates phospholipid scramblase activity following Ca(2+) stimulation. Expressed in excitatory neurons of the subfornical organ and functions as a thirst receptor that mediates neuronal response to hyperosmolality to drive thirst and drinking behavior. Facilitates intestinal motility by promoting proliferation of intestinal stem cells. Essential for the baby's first breath and respiration throughout life. Upon lung inflation conducts cation currents in alveolar type 1 and 2 cells triggering lamellar body exocytosis and surfactant secretion into airspace. Acts as an osmosensor in cochlear outer hair cells (OHCs) where it mediates calcium influx and regulatory volume decrease response. Required for the maintenance of OHC morphology, OHC survival and normal hearing. In terms of biological role, brain-specific osmosensitive calcium channel isoform. The chain is Mechanosensitive cation channel TMEM63B from Mus musculus (Mouse).